A 710-amino-acid chain; its full sequence is Putative transmembrane protein ORF710 (710 aa).

An N-terminal signal peptide occupies residues 1-33 (MKLDRKKKRLLLKTIFSIVILILPLTFLHPTNS). Transmembrane regions (helical) follow at residues 41–61 (VPIQIIYNYNVSGGVIYTAPL), 76–95 (YGTLLYSYLFSTNPAFVVWY), and 689–709 (VAIVSMAYGTKIWIGVFIFAI).

Its subcellular location is the host membrane. The chain is Putative transmembrane protein ORF710 from Acidianus convivator (ATV).